Here is a 310-residue protein sequence, read N- to C-terminus: Cytochrome f (310 aa).

An N-terminal signal peptide occupies residues 1–23; the sequence is MRRLLSSTFAALIVGLAVFSAPA. Positions 28, 48, 51, and 52 each coordinate heme. Residues 277–297 form a helical membrane-spanning segment; the sequence is IYGMLAFFAAVALAQIMLVLK.

This sequence belongs to the cytochrome f family. The 4 large subunits of the cytochrome b6-f complex are cytochrome b6, subunit IV (17 kDa polypeptide, PetD), cytochrome f and the Rieske protein, while the 4 small subunits are PetG, PetL, PetM and PetN. The complex functions as a dimer. Heme is required as a cofactor.

The protein localises to the cellular thylakoid membrane. Its function is as follows. Component of the cytochrome b6-f complex, which mediates electron transfer between photosystem II (PSII) and photosystem I (PSI), cyclic electron flow around PSI, and state transitions. In Synechococcus sp. (strain CC9311), this protein is Cytochrome f.